The primary structure comprises 483 residues: Cyclic AMP-dependent transcription factor ATF-7 (483 aa).

The segment at 1–285 (MGDDRPFVCN…GMVVGTASTM (285 aa)) is transactivation domain. The segment at 7–31 (FVCNAPGCGQRFTNEDHLAVHKHKH) adopts a C2H2-type zinc-finger fold. Thr51 carries the phosphothreonine; by MAPK11 modification. A phosphothreonine mark is found at Thr53 and Thr101. A Glycyl lysine isopeptide (Lys-Gly) (interchain with G-Cter in SUMO1) cross-link involves residue Lys107. Disordered regions lie at residues 110–148 (EPVE…TPTP) and 299–345 (HPDA…NRAA). Low complexity-rich tracts occupy residues 114–126 (VDSS…ASSP) and 307–320 (QPQV…PSTG). The segment at 325-483 (RTVDEDPDER…MTPQSQSAGR (159 aa)) is essential for binding adenovirus 2 E1A. Residues 326–343 (TVDEDPDERRQRFLERNR) are compositionally biased toward basic and acidic residues. The bZIP domain occupies 332–395 (DERRQRFLER…AQLKQLLLAH (64 aa)). Positions 334-354 (RRQRFLERNRAAASRCRQKRK) are basic motif. The leucine-zipper stretch occupies residues 360–388 (LEKKAEELTSQNIQLSNEVTLLRNEVAQL). The segment at 407-439 (TQGYLESPKESSEPTGSPAPVIQHSSATAPSNG) is disordered. Phosphoserine occurs at positions 413 and 423. Residues 429 to 439 (QHSSATAPSNG) are compositionally biased toward polar residues.

The protein belongs to the bZIP family. As to quaternary structure, homodimer; binds DNA as homodimer. Heterodimer; heterodimerizes with other members of ATF family and with JUN family members. Interacts with JNK2; the interaction does not phosphorylate ATF7 but acts as a docking site for other ATF-associated partners such as JUN family members. Interacts (via its transactivation domain) with TAF12 (isoforms TAFII15 and TAFII20); the interaction potentiates the transactivation activity (isoform TAFII20 only) and is inhibited by ATF7 sumoylation. Interacts with TAF4; the interaction inhibits the TAF12-dependent transactivation. Interacts with MAPK9; the interaction does not phosphorylate ATF7 but acts as a docking site for ATF7-associated partners such as JUN. Interacts with Ku complex components XRCC6 and XRCC7. Interacts with TERT. (Microbial infection) Interacts with adenovirus 2 E1A; the interaction enhances the ATF7-mediated viral transactivation activity which requires the zinc-binding domains of both E1A and ATF7. Post-translationally, on EGF stimulation, phosphorylated first on Thr-53 allowing subsequent phosphorylation on Thr-51. This latter phosphorylation prevents sumoylation, increases binding to TAF12 and enhances transcriptional activity. Sumoylation delays nuclear localization and inhibits transactivation activity through preventing binding to TAF12. RANBP2 appears to be the specific E3 ligase. In terms of processing, on EGF stimulation, phosphorylated first on Thr-53 allowing subsequent phosphorylation on Thr-51. This latter phosphorylation prevents sumoylation, increases binding to TAF12 and enhances transcriptional activity. Social isolation stress as well as TNF-alpha also induce the phosphorylation of ATF7. Phosphorylated in proliferating colonic and small intestinal epithelial cells. In terms of tissue distribution, expressed in various tissues including heart, brain, placenta, lung and skeletal muscle. Highest levels in skeletal muscle. Lowest in lung and placenta. As to expression, strongly expressed in skeletal muscle. Also expressed at lower levels in heart and lung.

It is found in the nucleus. Its subcellular location is the nucleoplasm. It localises to the chromosome. The protein resides in the telomere. The protein localises to the cytoplasm. Its function is as follows. Stress-responsive chromatin regulator that plays a role in various biological processes including innate immunological memory, adipocyte differentiation or telomerase regulation. In absence of stress, contributes to the formation of heterochromatin and heterochromatin-like structure by recruiting histone H3K9 tri- and di-methyltransferases thus silencing the transcription of target genes such as STAT1 in adipocytes, or genes involved in innate immunity in macrophages and adipocytes. Stress induces ATF7 phosphorylation that disrupts interactions with histone methyltransferase and enhances the association with coactivators containing histone acetyltransferase and/or histone demethylase, leading to disruption of the heterochromatin-like structure and subsequently transcriptional activation. In response to TNF-alpha, which is induced by various stresses, phosphorylated ATF7 and telomerase are released from telomeres leading to telomere shortening. Also plays a role in maintaining epithelial regenerative capacity and protecting against cell death during intestinal epithelial damage and repair. Acts as a dominant repressor of the E-selectin/NF-ELAM1/delta-A promoter. Functionally, acts as a negative regulator, inhibiting both ATF2 and ATF7 transcriptional activities. It may exert these effects by sequestrating in the cytoplasm the Thr-53 phosphorylating kinase, preventing activation. The chain is Cyclic AMP-dependent transcription factor ATF-7 (ATF7) from Homo sapiens (Human).